The following is a 336-amino-acid chain: TBC1 domain family member 21 (336 aa).

The region spanning 57–265 (GLHPFVRTEA…RLWEVLLTGK (209 aa)) is the Rab-GAP TBC domain.

In terms of assembly, interacts with ACTB. Interacts with ARMC12. Interacts with TOMM20 and DNAH7. Interacts with RAP1A. Interacts with RAB10. In terms of tissue distribution, expressed in testis, specifically in elongating and elongated spermatids (at protein level). Expressed in the sperm midpiece (at protein level).

The protein localises to the cytoplasmic vesicle. It is found in the secretory vesicle. Its subcellular location is the acrosome. It localises to the cytoplasm. The protein resides in the cytoskeleton. Its function is as follows. Acts as a GTPase-activating protein for Rab family protein (s). Essential for the establishment of male fertility, and is required for both the production of normal sperm number and sperm function. Plays an important role in the formation of intact mitochondria, outer dense fibers and axoneme within the sperm tail. Essential for sperm mitochondrial sheath formation and for the interactions of ARMC12 with VDAC2 and VDAC3. May be involved in acrosome formation and cytoskeletal reorganization during spermiogenesis, possibly by regulating RAB3A activity. The chain is TBC1 domain family member 21 from Mus musculus (Mouse).